A 190-amino-acid polypeptide reads, in one-letter code: Potassium-transporting ATPase KdpC subunit (190 aa).

The chain crosses the membrane as a helical span at residues 13–33 (IGFLLLTLVCGVLYPGVVTVF).

Belongs to the KdpC family. The system is composed of three essential subunits: KdpA, KdpB and KdpC.

It localises to the cell membrane. In terms of biological role, part of the high-affinity ATP-driven potassium transport (or Kdp) system, which catalyzes the hydrolysis of ATP coupled with the electrogenic transport of potassium into the cytoplasm. This subunit acts as a catalytic chaperone that increases the ATP-binding affinity of the ATP-hydrolyzing subunit KdpB by the formation of a transient KdpB/KdpC/ATP ternary complex. This Listeria monocytogenes serovar 1/2a (strain ATCC BAA-679 / EGD-e) protein is Potassium-transporting ATPase KdpC subunit.